A 71-amino-acid polypeptide reads, in one-letter code: Exodeoxyribonuclease 7 small subunit (71 aa).

The protein belongs to the XseB family. As to quaternary structure, heterooligomer composed of large and small subunits.

It localises to the cytoplasm. The enzyme catalyses Exonucleolytic cleavage in either 5'- to 3'- or 3'- to 5'-direction to yield nucleoside 5'-phosphates.. Functionally, bidirectionally degrades single-stranded DNA into large acid-insoluble oligonucleotides, which are then degraded further into small acid-soluble oligonucleotides. This Streptococcus uberis (strain ATCC BAA-854 / 0140J) protein is Exodeoxyribonuclease 7 small subunit.